A 303-amino-acid polypeptide reads, in one-letter code: Acetylglutamate kinase (303 aa).

Substrate contacts are provided by residues 69 to 70, arginine 91, and asparagine 201; that span reads GG.

It belongs to the acetylglutamate kinase family. ArgB subfamily.

It is found in the cytoplasm. It catalyses the reaction N-acetyl-L-glutamate + ATP = N-acetyl-L-glutamyl 5-phosphate + ADP. It functions in the pathway amino-acid biosynthesis; L-arginine biosynthesis; N(2)-acetyl-L-ornithine from L-glutamate: step 2/4. Catalyzes the ATP-dependent phosphorylation of N-acetyl-L-glutamate. The sequence is that of Acetylglutamate kinase from Novosphingobium aromaticivorans (strain ATCC 700278 / DSM 12444 / CCUG 56034 / CIP 105152 / NBRC 16084 / F199).